The primary structure comprises 351 residues: S-adenosylmethionine:tRNA ribosyltransferase-isomerase (351 aa).

The protein belongs to the QueA family. As to quaternary structure, monomer.

The protein localises to the cytoplasm. The enzyme catalyses 7-aminomethyl-7-carbaguanosine(34) in tRNA + S-adenosyl-L-methionine = epoxyqueuosine(34) in tRNA + adenine + L-methionine + 2 H(+). The protein operates within tRNA modification; tRNA-queuosine biosynthesis. Its function is as follows. Transfers and isomerizes the ribose moiety from AdoMet to the 7-aminomethyl group of 7-deazaguanine (preQ1-tRNA) to give epoxyqueuosine (oQ-tRNA). The sequence is that of S-adenosylmethionine:tRNA ribosyltransferase-isomerase from Fusobacterium nucleatum subsp. nucleatum (strain ATCC 25586 / DSM 15643 / BCRC 10681 / CIP 101130 / JCM 8532 / KCTC 2640 / LMG 13131 / VPI 4355).